The primary structure comprises 244 residues: Ribosomal RNA large subunit methyltransferase E (244 aa).

The tract at residues M1–N23 is disordered. Positions 91, 93, 116, 132, and 156 each coordinate S-adenosyl-L-methionine. Catalysis depends on K196, which acts as the Proton acceptor.

This sequence belongs to the class I-like SAM-binding methyltransferase superfamily. RNA methyltransferase RlmE family.

The protein resides in the cytoplasm. It catalyses the reaction uridine(2552) in 23S rRNA + S-adenosyl-L-methionine = 2'-O-methyluridine(2552) in 23S rRNA + S-adenosyl-L-homocysteine + H(+). Specifically methylates the uridine in position 2552 of 23S rRNA at the 2'-O position of the ribose in the fully assembled 50S ribosomal subunit. The chain is Ribosomal RNA large subunit methyltransferase E from Paramagnetospirillum magneticum (strain ATCC 700264 / AMB-1) (Magnetospirillum magneticum).